The sequence spans 565 residues: Glycine--tRNA ligase (565 aa).

Positions 98 and 164 each coordinate substrate. Residues 196–198, 206–211, 323–324, and 440–443 each bind ATP; these read RNE, IRLREF, EI, and GIDR. Position 211-215 (211-215) interacts with substrate; the sequence is FTQAE. 436–440 provides a ligand contact to substrate; that stretch reads EPSFG.

Belongs to the class-II aminoacyl-tRNA synthetase family.

The protein resides in the cytoplasm. The enzyme catalyses tRNA(Gly) + glycine + ATP = glycyl-tRNA(Gly) + AMP + diphosphate. In terms of biological role, catalyzes the attachment of glycine to tRNA(Gly). The protein is Glycine--tRNA ligase of Methanothermobacter thermautotrophicus (strain ATCC 29096 / DSM 1053 / JCM 10044 / NBRC 100330 / Delta H) (Methanobacterium thermoautotrophicum).